Here is a 58-residue protein sequence, read N- to C-terminus: Conotoxin TxXIIIA (58 aa).

The N-terminal stretch at 1–22 is a signal peptide; it reads MRCLPVFVILLLLIASVPSVDA. The propeptide occupies 23–46; that stretch reads ELKAKDDMPQASFHDNAERDQQKK.

Homodimer; disulfide-linked. 5 disulfide bonds are present in each homodimer: two intrachain disulfide bonds per subunit, and one interchain disulfide bond linking the two subunits. Expressed by the venom duct.

The protein resides in the secreted. The protein is Conotoxin TxXIIIA of Conus textile (Cloth-of-gold cone).